A 215-amino-acid polypeptide reads, in one-letter code: Pyrrolidone-carboxylate peptidase (215 aa).

Residues glutamate 80, cysteine 143, and histidine 167 contribute to the active site.

Belongs to the peptidase C15 family. As to quaternary structure, homotetramer.

Its subcellular location is the cytoplasm. It catalyses the reaction Release of an N-terminal pyroglutamyl group from a polypeptide, the second amino acid generally not being Pro.. Functionally, removes 5-oxoproline from various penultimate amino acid residues except L-proline. In Bacillus cytotoxicus (strain DSM 22905 / CIP 110041 / 391-98 / NVH 391-98), this protein is Pyrrolidone-carboxylate peptidase.